The primary structure comprises 239 residues: MLTRKQLDLLRFIQQRMRETGVPPSFDEMKDALDLKSKSGIHRLITALEERGFLRRLPNRARAIEVIRIPEAVASGPAEVVRFTPSVVEGGRSSAPVKPAPLPTALVSDESGHAVSIPVMGRIAAGTPISAIQSQSRSVAMSPDFLAGGEHYALEVRGDSMIEAGILDGDLVVIRRQDTANTGDIVVALIDDEEATLKRLRRRGSSIALEAANPAYETRVLGPDRVRIQGRLVSLIRKY.

Positions 26-46 (FDEMKDALDLKSKSGIHRLIT) form a DNA-binding region, H-T-H motif. Active-site for autocatalytic cleavage activity residues include Ser-160 and Lys-198.

It belongs to the peptidase S24 family. Homodimer.

The enzyme catalyses Hydrolysis of Ala-|-Gly bond in repressor LexA.. Its function is as follows. Represses a number of genes involved in the response to DNA damage (SOS response), including recA and lexA. In the presence of single-stranded DNA, RecA interacts with LexA causing an autocatalytic cleavage which disrupts the DNA-binding part of LexA, leading to derepression of the SOS regulon and eventually DNA repair. The polypeptide is LexA repressor (Methylobacterium sp. (strain 4-46)).